Here is a 385-residue protein sequence, read N- to C-terminus: MKKPIIEFKNVSKVFEDSNTKVLKDINFELEEGKFYTLLGASGSGKSTILNIIAGLLDATTGDIMLDGVRINDIPTNKRDVHTVFQSYALFPHMNVFENVAFPLRLRKIDKKEIEQRVAEVLKMVQLEGYEKRSIRKLSGGQRQRVAIARAIINQPRVVLLDEPLSALDLKLRTDMQYELRELQQRLGITFVFVTHDQEEALAMSDWIFVMNDGEIVQSGTPVDIYDEPINHFVATFIGESNILPGTMIEDYLVEFNGKRFEAVDGGMKPNEPVEVVIRPEDLRITLPEEGKLQVKVDTQLFRGVHYEIIAYDELGNEWMIHSTRKAIVGEEIGLDFEPEDIHIMRLNETEEEFDARIEEYVEIEEQEAGLINAIEEERDEENKL.

An ABC transporter domain is found at 6–238 (IEFKNVSKVF…PINHFVATFI (233 aa)). Residue 40-47 (GASGSGKS) coordinates ATP.

It belongs to the ABC transporter superfamily. Spermidine/putrescine importer (TC 3.A.1.11.1) family. The complex is composed of two ATP-binding proteins (PotA), two transmembrane proteins (PotB and PotC) and a solute-binding protein (PotD).

It localises to the cell membrane. The enzyme catalyses ATP + H2O + polyamine-[polyamine-binding protein]Side 1 = ADP + phosphate + polyamineSide 2 + [polyamine-binding protein]Side 1.. Part of the ABC transporter complex PotABCD involved in spermidine/putrescine import. Responsible for energy coupling to the transport system. The polypeptide is Spermidine/putrescine import ATP-binding protein PotA (Streptococcus pneumoniae serotype 4 (strain ATCC BAA-334 / TIGR4)).